A 105-amino-acid chain; its full sequence is Large ribosomal subunit protein uL24 (105 aa).

Belongs to the universal ribosomal protein uL24 family. As to quaternary structure, part of the 50S ribosomal subunit.

In terms of biological role, one of two assembly initiator proteins, it binds directly to the 5'-end of the 23S rRNA, where it nucleates assembly of the 50S subunit. One of the proteins that surrounds the polypeptide exit tunnel on the outside of the subunit. In Francisella philomiragia subsp. philomiragia (strain ATCC 25017 / CCUG 19701 / FSC 153 / O#319-036), this protein is Large ribosomal subunit protein uL24.